Here is a 345-residue protein sequence, read N- to C-terminus: Hydroxymethylglutaryl-CoA synthase (345 aa).

Asp28 contributes to the (3S)-3-hydroxy-3-methylglutaryl-CoA binding site. Residue Glu80 is the Proton donor/acceptor of the active site. (3S)-3-hydroxy-3-methylglutaryl-CoA contacts are provided by Cys112 and Thr153. The Acyl-thioester intermediate role is filled by Cys112. Arg199 contacts CoA. Residues Thr201 and His234 each coordinate (3S)-3-hydroxy-3-methylglutaryl-CoA. His234 acts as the Proton donor/acceptor in catalysis. Lys239 lines the CoA pocket. The (3S)-3-hydroxy-3-methylglutaryl-CoA site is built by Arg243, Asn266, and Ser296.

The protein belongs to the thiolase-like superfamily. Archaeal HMG-CoA synthase family. Interacts with acetoacetyl-CoA thiolase that catalyzes the precedent step in the pathway and with a DUF35 protein. The acetoacetyl-CoA thiolase/HMG-CoA synthase complex channels the intermediate via a fused CoA-binding site, which allows for efficient coupling of the endergonic thiolase reaction with the exergonic HMGCS reaction.

The catalysed reaction is acetoacetyl-CoA + acetyl-CoA + H2O = (3S)-3-hydroxy-3-methylglutaryl-CoA + CoA + H(+). The protein operates within metabolic intermediate biosynthesis; (R)-mevalonate biosynthesis; (R)-mevalonate from acetyl-CoA: step 2/3. In terms of biological role, catalyzes the condensation of acetyl-CoA with acetoacetyl-CoA to form 3-hydroxy-3-methylglutaryl-CoA (HMG-CoA). Functions in the mevalonate (MVA) pathway leading to isopentenyl diphosphate (IPP), a key precursor for the biosynthesis of isoprenoid compounds that are building blocks of archaeal membrane lipids. The protein is Hydroxymethylglutaryl-CoA synthase of Methanocaldococcus jannaschii (strain ATCC 43067 / DSM 2661 / JAL-1 / JCM 10045 / NBRC 100440) (Methanococcus jannaschii).